We begin with the raw amino-acid sequence, 129 residues long: Cocaine- and amphetamine-regulated transcript protein (129 aa).

A signal peptide spans 1–27 (MESSRLRLLPLLGAALLLLLPLLGARA). A Phosphotyrosine modification is found at tyrosine 41. Serine 48 is modified (phosphoserine). 3 disulfide bridges follow: cysteine 95/cysteine 113, cysteine 101/cysteine 121, and cysteine 115/cysteine 128.

The protein belongs to the CART family.

It is found in the secreted. Its function is as follows. Satiety factor closely associated with the actions of leptin and neuropeptide y; this anorectic peptide inhibits both normal and starvation-induced feeding and completely blocks the feeding response induced by neuropeptide Y and regulated by leptin in the hypothalamus. The sequence is that of Cocaine- and amphetamine-regulated transcript protein (Cartpt) from Mus musculus (Mouse).